Reading from the N-terminus, the 278-residue chain is S-adenosylmethionine decarboxylase proenzyme (278 aa).

The disordered stretch occupies residues 96–115 (LTPESLTGESPGPLPGNKPS). S126 acts as the Schiff-base intermediate with substrate; via pyruvic acid in catalysis. A Pyruvic acid (Ser); by autocatalysis modification is found at S126. The active-site Proton acceptor; for processing activity is H131. The active-site Proton donor; for catalytic activity is the C154.

Belongs to the prokaryotic AdoMetDC family. Type 2 subfamily. In terms of assembly, heterooctamer of four alpha and four beta chains arranged as a tetramer of alpha/beta heterodimers. Requires pyruvate as cofactor. Post-translationally, is synthesized initially as an inactive proenzyme. Formation of the active enzyme involves a self-maturation process in which the active site pyruvoyl group is generated from an internal serine residue via an autocatalytic post-translational modification. Two non-identical subunits are generated from the proenzyme in this reaction, and the pyruvate is formed at the N-terminus of the alpha chain, which is derived from the carboxyl end of the proenzyme. The post-translation cleavage follows an unusual pathway, termed non-hydrolytic serinolysis, in which the side chain hydroxyl group of the serine supplies its oxygen atom to form the C-terminus of the beta chain, while the remainder of the serine residue undergoes an oxidative deamination to produce ammonia and the pyruvoyl group blocking the N-terminus of the alpha chain.

It carries out the reaction S-adenosyl-L-methionine + H(+) = S-adenosyl 3-(methylsulfanyl)propylamine + CO2. The protein operates within amine and polyamine biosynthesis; S-adenosylmethioninamine biosynthesis; S-adenosylmethioninamine from S-adenosyl-L-methionine: step 1/1. Its function is as follows. Catalyzes the decarboxylation of S-adenosylmethionine to S-adenosylmethioninamine (dcAdoMet), the propylamine donor required for the synthesis of the polyamines spermine and spermidine from the diamine putrescine. This Alkaliphilus metalliredigens (strain QYMF) protein is S-adenosylmethionine decarboxylase proenzyme.